We begin with the raw amino-acid sequence, 273 residues long: Rhamnulose-1-phosphate aldolase (273 aa).

The active site involves glutamate 117. 3 residues coordinate Zn(2+): histidine 140, histidine 142, and histidine 211.

This sequence belongs to the aldolase class II family. RhaD subfamily. It depends on Zn(2+) as a cofactor.

The protein resides in the cytoplasm. It carries out the reaction L-rhamnulose 1-phosphate = (S)-lactaldehyde + dihydroxyacetone phosphate. The protein operates within carbohydrate degradation; L-rhamnose degradation; glycerone phosphate from L-rhamnose: step 3/3. Functionally, catalyzes the reversible cleavage of L-rhamnulose-1-phosphate to dihydroxyacetone phosphate (DHAP) and L-lactaldehyde. The polypeptide is Rhamnulose-1-phosphate aldolase (Listeria monocytogenes serovar 1/2a (strain ATCC BAA-679 / EGD-e)).